The chain runs to 55 residues: Large ribosomal subunit protein bL33 (55 aa).

The protein belongs to the bacterial ribosomal protein bL33 family.

The protein is Large ribosomal subunit protein bL33 of Orientia tsutsugamushi (strain Boryong) (Rickettsia tsutsugamushi).